The chain runs to 87 residues: uncharacterized protein (87 aa).

The signal sequence occupies residues 1-19 (MLVLLVAVLVTAVYAFVHA). Residues 39–59 (LVILGAAVALASILYPVLGVL) traverse the membrane as a helical segment.

It to M.leprae ML2453.

It is found in the membrane. This is an uncharacterized protein from Mycobacterium bovis (strain ATCC BAA-935 / AF2122/97).